Reading from the N-terminus, the 351-residue chain is Neutral protease 2 homolog MGG_10927 (351 aa).

The signal sequence occupies residues 1–16 (MKFSIGVSLLATLAGA). Positions 17 to 177 (VNVDMAKRDT…AAFLAKRTIV (161 aa)) are excised as a propeptide. Cystine bridges form between Cys181–Cys253 and Cys260–Cys278. Position 303 (His303) interacts with Zn(2+). Residue Glu304 is part of the active site. His307 lines the Zn(2+) pocket.

The protein belongs to the peptidase M35 family. It depends on Zn(2+) as a cofactor.

It is found in the secreted. The enzyme catalyses Preferential cleavage of bonds with hydrophobic residues in P1'. Also 3-Asn-|-Gln-4 and 8-Gly-|-Ser-9 bonds in insulin B chain.. Its function is as follows. Secreted metalloproteinase that allows assimilation of proteinaceous substrates. Shows high activities on basic nuclear substrates such as histone and protamine. This Colletotrichum graminicola (strain M1.001 / M2 / FGSC 10212) (Maize anthracnose fungus) protein is Neutral protease 2 homolog MGG_10927.